Here is an 82-residue protein sequence, read N- to C-terminus: uncharacterized protein (82 aa).

This is an uncharacterized protein from Bacillus subtilis (strain 168).